We begin with the raw amino-acid sequence, 101 residues long: Apolipoprotein C-II (101 aa).

An N-terminal signal peptide occupies residues 1-22 (MGTRYFLVGFLILLVLGFEAQG). The segment at 66–74 (TVDEKIRDI) is lipid binding. Residues 78–101 (STAAVTTYAGIITDQVFSILSGED) are lipoprotein lipase cofactor.

This sequence belongs to the apolipoprotein C2 family. In terms of processing, proapolipoprotein C-II is synthesized as a sialic acid containing glycoprotein which is subsequently desialylated prior to its proteolytic processing. Proapolipoprotein C-II, the major form found in plasma undergoes proteolytic cleavage of its N-terminal hexapeptide to generate apolipoprotein C-II, which occurs as the minor form in plasma.

The protein resides in the secreted. In terms of biological role, component of chylomicrons, very low-density lipoproteins (VLDL), low-density lipoproteins (LDL), and high-density lipoproteins (HDL) in plasma. Plays an important role in lipoprotein metabolism as an activator of lipoprotein lipase. Both proapolipoprotein C-II and apolipoprotein C-II can activate lipoprotein lipase. The polypeptide is Apolipoprotein C-II (APOC2) (Capra hircus aegagrus (Wild goat)).